A 675-amino-acid chain; its full sequence is Protein PALS1 (675 aa).

Disordered regions lie at residues 1 to 34 and 51 to 78; these read MTTSHMNGHVTEESDSEVKNVDLASPEEHQKHRE and RRSAQLERIRQQQEDMRRRREEEGKKQE. The tract at residues 1–345 is required for the correct localization of PALS1 and PATJ at cell-cell contacts and the normal formation of tight junctions and adherens junctions; it reads MTTSHMNGHV…QQIKPPPAKE (345 aa). Composition is skewed to basic and acidic residues over residues 10-34 and 54-78; these read VTEESDSEVKNVDLASPEEHQKHRE and AQLERIRQQQEDMRRRREEEGKKQE. 2 positions are modified to phosphoserine: Ser14 and Ser25. An interaction with PARD6B region spans residues 21 to 140; it reads VDLASPEEHQ…LKHIQHTLVD (120 aa). A phosphoserine mark is found at Ser83 and Ser84. L27 domains are found at residues 120-177 and 179-235; these read KILE…NKAS and PFPL…MQLE. The tract at residues 181–243 is interaction with LIN7C; sequence PLISNAQDLA…LEPITDERVY (63 aa). A PDZ domain is found at 256-336; sequence IVRIEKARDI…TLTFVLIPSQ (81 aa). In terms of domain architecture, SH3 spans 345–417; sequence ETVIHVKAHF…PGKSFQQQRE (73 aa). Residues 479–660 enclose the Guanylate kinase-like domain; that stretch reads KRPIILIGPQ…AYQELLRLIN (182 aa). 486-493 contacts ATP; that stretch reads GPQNCGQN.

It belongs to the MAGUK family. Heterodimer with MPP1. Forms a heterotrimeric complex composed of PALS1, LIN7B and PATJ; the N-terminal L27 domain of PALS1 interacts with the L27 domain of PATJ and the C-terminal L27 domain of PALS1 interacts with the L27 domain of LIN7B. Component of a complex composed of PALS1, CRB1 and MPP4. Component of a complex whose core is composed of ARHGAP17, AMOT, PALS1, PATJ and PARD3/PAR3. Component of a complex composed of PALS1, CRB1 and EPB41L5. Within the complex, interacts (via HOOK domain) with EPB41L5 (via FERM domain), and interacts with CRB1 (via intracellular domain). Component of a complex composed of PALS1, MPP3 and CRB1; PALS1 acts as a bridging protein between MPP3 (via guanylate kinase-like domain) and CRB1. Component of a complex composed of CRB3, PALS1 and PATJ. As part of the Crumbs complex; interacts with WWP1, the interaction is enhanced by AMOTL2 and facilitates WWP1 localization to the plasma membrane. The Crumbs complex promotes monoubiquitination of AMOTL2 by WWP1, which activates the Hippo signaling pathway. Interacts (via PDZ domain) with PATJ (via N-terminus). Interacts with EZR. Interacts (via PDZ domain) with CRB1 (via C-terminal ERLI motif). While the PDZ domain is sufficient for interaction with CRB1, the adjacent SH3 and guanylate kinase-like domains are likely to contribute to a high affinity interaction. Interacts with WWTR1/TAZ (via WW domain). Interacts with MPP7. Interacts (via PDZ domain) with CRB3 (via C-terminus). Interacts with LIN7C. Interacts with MPDZ. Interacts with PARD6B. Interacts with SC6A1. Interacts with CDH5; the interaction promotes PALS1 localization to cell junctions and is required for CDH5-mediated vascular lumen formation and endothelial cell. Interacts with NPHP1 (via coiled coil and SH3 domains). Interacts with NPHP4. Interacts with CRB2. In terms of assembly, (Microbial infection) Interacts (via PDZ domain) with human coronaviruses SARS-CoV and, probably, SARS-CoV-2 envelope small membrane protein E (via C-terminus); this inhibits the interaction between PALS1 and CRB3. In terms of tissue distribution, expressed at the outer limiting membrane in the retina (at protein level). Expressed in T lymphocytes (at protein level). Expressed in the kidney (at protein level).

Its subcellular location is the golgi apparatus. The protein localises to the cell membrane. It localises to the endomembrane system. It is found in the cell junction. The protein resides in the tight junction. Its subcellular location is the adherens junction. The protein localises to the cell projection. It localises to the axon. It is found in the perikaryon. The protein resides in the apical cell membrane. Its subcellular location is the endoplasmic reticulum-Golgi intermediate compartment. Plays a role in tight junction biogenesis and in the establishment of cell polarity in epithelial cells. Also involved in adherens junction biogenesis by ensuring correct localization of the exocyst complex protein EXOC4/SEC8 which allows trafficking of adherens junction structural component CDH1 to the cell surface. Plays a role through its interaction with CDH5 in vascular lumen formation and endothelial membrane polarity. Required during embryonic and postnatal retinal development. Required for the maintenance of cerebellar progenitor cells in an undifferentiated proliferative state, preventing premature differentiation, and is required for cerebellar histogenesis, fissure formation, cerebellar layer organization and cortical development. Plays a role in neuronal progenitor cell survival, potentially via promotion of mTOR signaling. Plays a role in the radial and longitudinal extension of the myelin sheath in Schwann cells. May modulate SC6A1/GAT1-mediated GABA uptake by stabilizing the transporter. Plays a role in the T-cell receptor-mediated activation of NF-kappa-B. Required for localization of EZR to the apical membrane of parietal cells and may play a role in the dynamic remodeling of the apical cytoskeleton. Required for the normal polarized localization of the vesicular marker STX4. Required for the correct trafficking of the myelin proteins PMP22 and MAG. Involved in promoting phosphorylation and cytoplasmic retention of transcriptional coactivators YAP1 and WWTR1/TAZ which leads to suppression of TGFB1-dependent transcription of target genes such as CCN2/CTGF, SERPINE1/PAI1, SNAI1/SNAIL1 and SMAD7. Functionally, (Microbial infection) Acts as an interaction partner for human coronaviruses SARS-CoV and, probably, SARS-CoV-2 envelope protein E which results in delayed formation of tight junctions and disregulation of cell polarity. The protein is Protein PALS1 of Homo sapiens (Human).